The sequence spans 891 residues: Schlafen family member 5 (891 aa).

A Glycyl lysine isopeptide (Lys-Gly) (interchain with G-Cter in SUMO2) cross-link involves residue Lys59. 578–585 (GLPGSGKT) serves as a coordination point for ATP.

It belongs to the Schlafen family. Subgroup III subfamily.

Functionally, may have a role in hematopoietic cell differentiation. The sequence is that of Schlafen family member 5 (SLFN5) from Homo sapiens (Human).